A 134-amino-acid polypeptide reads, in one-letter code: Profilin-1 (134 aa).

A disulfide bridge connects residues Cys13 and Cys118. Residues 84 to 100 (AVIRGKKGSGGITIKKT) carry the Involved in PIP2 interaction motif. At Thr114 the chain carries Phosphothreonine.

Belongs to the profilin family. Occurs in many kinds of cells as a complex with monomeric actin in a 1:1 ratio. Phosphorylated by MAP kinases.

Its subcellular location is the cytoplasm. It is found in the cytoskeleton. Functionally, binds to actin and affects the structure of the cytoskeleton. At high concentrations, profilin prevents the polymerization of actin, whereas it enhances it at low concentrations. By binding to PIP2, it inhibits the formation of IP3 and DG. The chain is Profilin-1 (PRO1) from Olea europaea (Common olive).